The following is a 109-amino-acid chain: Spermidine export protein MdtI (109 aa).

The Periplasmic portion of the chain corresponds to 1–5 (MAQFE). A helical transmembrane segment spans residues 6–26 (WVHAAWLALAIVLEIVANVFL). Residues 27–35 (KFSDGFRRK) lie on the Cytoplasmic side of the membrane. Residues 36 to 56 (IFGLLSLAAVLAAFSALSQAV) traverse the membrane as a helical segment. The Periplasmic portion of the chain corresponds to 57–63 (KGIDLSV). A helical membrane pass occupies residues 64 to 84 (VYALWGGFGIAATLAAGWILF). At 85 to 87 (GQR) the chain is on the cytoplasmic side. The helical transmembrane segment at 88–108 (LNRKGWIGLVLLLAGMIMVKL) threads the bilayer. Ala109 is a topological domain (periplasmic).

This sequence belongs to the drug/metabolite transporter (DMT) superfamily. Small multidrug resistance (SMR) (TC 2.A.7.1) family. MdtI subfamily. Forms a complex with MdtJ.

It is found in the cell inner membrane. Catalyzes the excretion of spermidine. This Shigella flexneri protein is Spermidine export protein MdtI (mdtI).